Reading from the N-terminus, the 236-residue chain is Alpha-acetolactate decarboxylase (236 aa).

This sequence belongs to the alpha-acetolactate decarboxylase family.

The enzyme catalyses (2S)-2-acetolactate + H(+) = (R)-acetoin + CO2. The protein operates within polyol metabolism; (R,R)-butane-2,3-diol biosynthesis; (R,R)-butane-2,3-diol from pyruvate: step 2/3. Functionally, converts acetolactate into acetoin. The protein is Alpha-acetolactate decarboxylase (aldB) of Lactococcus lactis subsp. lactis (strain IL1403) (Streptococcus lactis).